Here is a 264-residue protein sequence, read N- to C-terminus: Glutamate racemase (264 aa).

Substrate is bound by residues 10-11 (DS) and 42-43 (YG). The active-site Proton donor/acceptor is the C73. A substrate-binding site is contributed by 74–75 (NT). C183 functions as the Proton donor/acceptor in the catalytic mechanism. 184-185 (TH) is a substrate binding site.

This sequence belongs to the aspartate/glutamate racemases family.

The enzyme catalyses L-glutamate = D-glutamate. Its pathway is cell wall biogenesis; peptidoglycan biosynthesis. Functionally, provides the (R)-glutamate required for cell wall biosynthesis. This is Glutamate racemase from Streptococcus sanguinis (strain SK36).